The following is a 163-amino-acid chain: uncharacterized protein (163 aa).

Residues 11 to 31 (LSWFLLLVVVILIFFLLLSCL) traverse the membrane as a helical segment.

Its subcellular location is the membrane. This is an uncharacterized protein from Saccharomyces cerevisiae (strain ATCC 204508 / S288c) (Baker's yeast).